A 423-amino-acid polypeptide reads, in one-letter code: Histidine--tRNA ligase (423 aa).

Belongs to the class-II aminoacyl-tRNA synthetase family. In terms of assembly, homodimer.

The protein resides in the cytoplasm. It carries out the reaction tRNA(His) + L-histidine + ATP = L-histidyl-tRNA(His) + AMP + diphosphate + H(+). The protein is Histidine--tRNA ligase of Prochlorococcus marinus (strain NATL1A).